We begin with the raw amino-acid sequence, 418 residues long: MPGYYLWTIGCQMNQAESDRLGRLFELWGYSLADKAEDAELVLVNSCVVREHAENKVVNRLHLLRSLKNENPKLKIALTGCLVGQDISLIKKKFPFVDYIFGPGSMPDWREIPEGFILPLRPPVSANVTIMQGCNNFCTYCVVPYRRGREKSRSIAEIGCEVAELVRRGSREVVLLGQNVDSYGHDLPEKPCLADLLSALHDITGLLRIRFLTSHPKDISQKLIDAMAHLPKVCRSLSLPVQSGDDTILASMRRGYTNQQYRELVERIKTAMPDISLQTDLIVGFPSENEEQFNQSYKLMADIGYDAIHVAAYSPRPQTVAAHDMADDVPVIEKKRRLKLIEDLQKETVGKANAALMDTFAEVLVEGLQKNKWQGRTLGGKLVFLESDLPLEGCLVKVKIFKTSPWSLQAKLVNIMES.

The region spanning 2–118 (PGYYLWTIGC…WREIPEGFIL (117 aa)) is the MTTase N-terminal domain. [4Fe-4S] cluster-binding residues include Cys-11, Cys-47, Cys-81, Cys-134, Cys-138, and Cys-141. Positions 120–351 (LRPPVSANVT…EDLQKETVGK (232 aa)) constitute a Radical SAM core domain. The region spanning 346-414 (KETVGKANAA…PWSLQAKLVN (69 aa)) is the TRAM domain.

This sequence belongs to the methylthiotransferase family. MiaB subfamily. As to quaternary structure, monomer. It depends on [4Fe-4S] cluster as a cofactor.

The protein resides in the cytoplasm. It catalyses the reaction N(6)-dimethylallyladenosine(37) in tRNA + (sulfur carrier)-SH + AH2 + 2 S-adenosyl-L-methionine = 2-methylsulfanyl-N(6)-dimethylallyladenosine(37) in tRNA + (sulfur carrier)-H + 5'-deoxyadenosine + L-methionine + A + S-adenosyl-L-homocysteine + 2 H(+). Its function is as follows. Catalyzes the methylthiolation of N6-(dimethylallyl)adenosine (i(6)A), leading to the formation of 2-methylthio-N6-(dimethylallyl)adenosine (ms(2)i(6)A) at position 37 in tRNAs that read codons beginning with uridine. The sequence is that of tRNA-2-methylthio-N(6)-dimethylallyladenosine synthase from Dehalococcoides mccartyi (strain ATCC BAA-2100 / JCM 16839 / KCTC 5957 / BAV1).